We begin with the raw amino-acid sequence, 669 residues long: DNA ligase (669 aa).

Residues 34 to 38 (DAEYD), 83 to 84 (SL), and Glu-114 contribute to the NAD(+) site. The N6-AMP-lysine intermediate role is filled by Lys-116. NAD(+) is bound by residues Arg-137, Glu-171, Lys-287, and Lys-311. The Zn(2+) site is built by Cys-405, Cys-408, Cys-423, and Cys-428. The BRCT domain maps to 591–669 (NVESYFAGKT…EERFLQELNK (79 aa)).

It belongs to the NAD-dependent DNA ligase family. LigA subfamily. It depends on Mg(2+) as a cofactor. Requires Mn(2+) as cofactor.

It catalyses the reaction NAD(+) + (deoxyribonucleotide)n-3'-hydroxyl + 5'-phospho-(deoxyribonucleotide)m = (deoxyribonucleotide)n+m + AMP + beta-nicotinamide D-nucleotide.. In terms of biological role, DNA ligase that catalyzes the formation of phosphodiester linkages between 5'-phosphoryl and 3'-hydroxyl groups in double-stranded DNA using NAD as a coenzyme and as the energy source for the reaction. It is essential for DNA replication and repair of damaged DNA. This is DNA ligase from Bacillus cereus (strain B4264).